Reading from the N-terminus, the 192-residue chain is FMN-dependent NADH:quinone oxidoreductase 1 (192 aa).

Residues Ser9 and 15–17 (SYS) contribute to the FMN site.

Belongs to the azoreductase type 1 family. Homodimer. Requires FMN as cofactor.

It catalyses the reaction 2 a quinone + NADH + H(+) = 2 a 1,4-benzosemiquinone + NAD(+). The catalysed reaction is N,N-dimethyl-1,4-phenylenediamine + anthranilate + 2 NAD(+) = 2-(4-dimethylaminophenyl)diazenylbenzoate + 2 NADH + 2 H(+). Quinone reductase that provides resistance to thiol-specific stress caused by electrophilic quinones. In terms of biological role, also exhibits azoreductase activity. Catalyzes the reductive cleavage of the azo bond in aromatic azo compounds to the corresponding amines. This Colwellia psychrerythraea (strain 34H / ATCC BAA-681) (Vibrio psychroerythus) protein is FMN-dependent NADH:quinone oxidoreductase 1.